The primary structure comprises 184 residues: ATP synthase subunit delta (184 aa).

This sequence belongs to the ATPase delta chain family. In terms of assembly, F-type ATPases have 2 components, F(1) - the catalytic core - and F(0) - the membrane proton channel. F(1) has five subunits: alpha(3), beta(3), gamma(1), delta(1), epsilon(1). F(0) has three main subunits: a(1), b(2) and c(10-14). The alpha and beta chains form an alternating ring which encloses part of the gamma chain. F(1) is attached to F(0) by a central stalk formed by the gamma and epsilon chains, while a peripheral stalk is formed by the delta and b chains.

The protein resides in the cell inner membrane. F(1)F(0) ATP synthase produces ATP from ADP in the presence of a proton or sodium gradient. F-type ATPases consist of two structural domains, F(1) containing the extramembraneous catalytic core and F(0) containing the membrane proton channel, linked together by a central stalk and a peripheral stalk. During catalysis, ATP synthesis in the catalytic domain of F(1) is coupled via a rotary mechanism of the central stalk subunits to proton translocation. Functionally, this protein is part of the stalk that links CF(0) to CF(1). It either transmits conformational changes from CF(0) to CF(1) or is implicated in proton conduction. The protein is ATP synthase subunit delta of Rickettsia rickettsii (strain Iowa).